A 473-amino-acid polypeptide reads, in one-letter code: Spliceosome-associated protein CWC27 homolog (473 aa).

Ser2 carries the post-translational modification N-acetylserine. The 156-residue stretch at 11–166 (TNGKVLLKTT…NPHKIKSCEV (156 aa)) folds into the PPIase cyclophilin-type domain. Over residues 177–193 (REIKRPKKEKPEEEVKK) the composition is skewed to basic and acidic residues. Disordered stretches follow at residues 177–386 (REIK…EDQT) and 399–473 (QAIA…KERR). A coiled-coil region spans residues 206–230 (SFGEEAEEEEEEVNRVSQSMKGKSK). Basic and acidic residues predominate over residues 231-241 (SSHDLLKDDPH). A compositionally biased stretch (acidic residues) spans 257-275 (GDLDDDGEDESAEYDEYVD). 3 stretches are compositionally biased toward basic and acidic residues: residues 276 to 287 (GDEKNLMRERIA), 305 to 348 (EVEK…KRSE), and 360 to 372 (EYRR…EALR). Positions 307 to 378 (EKKSVSRSEE…EALRKQQSKK (72 aa)) form a coiled coil. Residue Ser347 is modified to Phosphoserine. Residues 405–419 (PENDIPETEVEDDEG) show a composition bias toward acidic residues. 2 stretches are compositionally biased toward basic and acidic residues: residues 426 to 438 (QFED…KDAS) and 458 to 473 (RREE…KERR).

It belongs to the cyclophilin-type PPIase family. As to quaternary structure, part of the activated spliceosome B/catalytic step 1 spliceosome, one of the forms of the spliceosome which has a well-formed active site but still cannot catalyze the branching reaction and is composed at least of 52 proteins, the U2, U5 and U6 snRNAs and the pre-mRNA. Recruited during early steps of activated spliceosome B maturation, it is probably one of the first proteins released from this complex as he matures to the spliceosome C complex. Component of the minor spliceosome, which splices U12-type introns.

The protein resides in the nucleus. In terms of biological role, as part of the spliceosome, plays a role in pre-mRNA splicing. Probable inactive PPIase with no peptidyl-prolyl cis-trans isomerase activity. As a component of the minor spliceosome, involved in the splicing of U12-type introns in pre-mRNAs. This chain is Spliceosome-associated protein CWC27 homolog, found in Macaca fascicularis (Crab-eating macaque).